The primary structure comprises 74 residues: U4-theraphotoxin-Cg1a (74 aa).

Positions 1-19 (MNATIFALLLLLNLAMYNA) are cleaved as a signal peptide. Positions 20-39 (AEQSSETDMDDTLLIPEINR) are excised as a propeptide. 3 disulfide bridges follow: cysteine 42–cysteine 56, cysteine 49–cysteine 61, and cysteine 55–cysteine 71.

Belongs to the neurotoxin 36 family. 01 subfamily. As to expression, expressed by the venom gland.

It is found in the secreted. In terms of biological role, probable ion channel inhibitor. This Chilobrachys guangxiensis (Chinese earth tiger tarantula) protein is U4-theraphotoxin-Cg1a.